The following is a 208-amino-acid chain: Protein disulfide-isomerase A3 (208 aa).

The region spanning 1-44 (RLAPEYEAAATRYGVSGYPTLKDGEEAGAYDGPRTADGIVSHLK) is the Thioredoxin 1 domain. An N6-succinyllysine modification is found at K44. At K49 the chain carries N6-acetyllysine. T133 carries the post-translational modification Phosphothreonine. The 58-residue stretch at 151–208 (SRFLQDYFDGNLKRYLKSEPIPETNDGPVKMDATANDVPSPYEVKGFPTIYFSPANKK) folds into the Thioredoxin 2 domain. Residue K163 is modified to N6-acetyllysine.

Belongs to the protein disulfide isomerase family. In terms of assembly, part of the major histocompatibility complex class I (MHC I) peptide loading complex composed of TAP1, TAP2, B2M, MHC heavy chain, TAPBP, PDIA3, and CALR. Interacts with ERP27 and CANX. Interacts with SERPINA2 and SERPINA1. Interacts with ATP2A2. In terms of processing, within the major histocompatibility complex class I (MHC I) peptide loading complex forms reversible disulfide-linked heterodimers with TAPBP as part of its protein folding chaperone activity. This is essential to assist the dynamic assembly of the MHC I complex with high affinity antigens in the endoplasmic reticulum. Phosphorylated. In terms of tissue distribution, in the caput epididymal spermatozoa, detected in the mid-peice and at low levels in the principal piece. In the cauda epididymal spermatozoa, detected at very low levels in the principal piece and not in the mid-piece (at protein level).

It localises to the endoplasmic reticulum. The protein localises to the endoplasmic reticulum lumen. It is found in the melanosome. The catalysed reaction is Catalyzes the rearrangement of -S-S- bonds in proteins.. Its function is as follows. Protein disulfide isomerase that catalyzes the formation, isomerization, and reduction or oxidation of disulfide bonds in client proteins and functions as a protein folding chaperone. Core component of the major histocompatibility complex class I (MHC I) peptide loading complex where it functions as an essential folding chaperone for TAPBP. Through TAPBP, assists the dynamic assembly of the MHC I complex with high affinity antigens in the endoplasmic reticulum. Therefore, plays a crucial role in the presentation of antigens to cytotoxic T cells in adaptive immunity. The sequence is that of Protein disulfide-isomerase A3 from Mesocricetus auratus (Golden hamster).